Consider the following 156-residue polypeptide: Oxidized purine nucleoside triphosphate hydrolase (156 aa).

In terms of domain architecture, Nudix hydrolase spans 3 to 132 (TSKLLTLVLV…WFPLMLQKKR (130 aa)). A 2-oxo-dATP-binding site is contributed by Thr-8. Residues Thr-8, Lys-23, Asn-33, and 35–38 (FGGK) each bind O(6)-methyl-dGMP. 8-oxo-dGTP is bound at residue Lys-23. 2-oxo-dATP-binding positions include Asn-33 and 35-38 (FGGK). Residues Gly-36, Glu-52, Glu-55, Glu-56, and Glu-100 each contribute to the Mg(2+) site. The Nudix box signature appears at 37–58 (GKVQTGETIEQAARRELLEESG). 117-120 (WADD) is a 2-oxo-dATP binding site. O(6)-methyl-dGMP is bound at residue 117–120 (WADD).

Belongs to the Nudix hydrolase family. Monomer. Mg(2+) is required as a cofactor.

The protein localises to the cytoplasm. Its subcellular location is the cytosol. It localises to the mitochondrion matrix. The protein resides in the nucleus. It catalyses the reaction 2-oxo-dATP + H2O = 2-oxo-dAMP + diphosphate + H(+). The catalysed reaction is 2-oxo-ATP + H2O = 2-oxo-AMP + diphosphate + H(+). The enzyme catalyses 8-oxo-dGTP + H2O = 8-oxo-dGMP + diphosphate + H(+). It carries out the reaction 8-oxo-dATP + H2O = 8-oxo-dAMP + diphosphate + H(+). It catalyses the reaction O(6)-methyl-dGTP + H2O = O(6)-methyl-dGMP + diphosphate + H(+). The catalysed reaction is N(6)-methyl-dATP + H2O = N(6)-methyl-dAMP + diphosphate + H(+). The enzyme catalyses N(6)-methyl-ATP + H2O = N(6)-methyl-AMP + diphosphate + H(+). Its activity is regulated as follows. Inhibited by TH588. In terms of biological role, oxidized purine nucleoside triphosphate hydrolase which is a prominent sanitizer of the oxidized nucleotide pool. Catalyzes the hydrolysis of 2-oxo-dATP (2-hydroxy-dATP) into 2-oxo-dAMP. Also has a significant hydrolase activity toward 2-oxo-ATP, 8-oxo-dGTP and 8-oxo-dATP. Through the hydrolysis of oxidized purine nucleoside triphosphates, prevents their incorporation into DNA and the subsequent transversions A:T to C:G and G:C to T:A. Also catalyzes the hydrolysis of methylated purine nucleoside triphosphate preventing their integration into DNA. Through this antimutagenic activity protects cells from oxidative stress. This chain is Oxidized purine nucleoside triphosphate hydrolase (nudt1), found in Danio rerio (Zebrafish).